The chain runs to 239 residues: Ribose-5-phosphate isomerase A (239 aa).

Substrate-binding positions include 40-43 (SGST), 96-99 (DGAD), and 110-113 (KGGG). E119 serves as the catalytic Proton acceptor. K137 contributes to the substrate binding site.

The protein belongs to the ribose 5-phosphate isomerase family. As to quaternary structure, homodimer.

It carries out the reaction aldehydo-D-ribose 5-phosphate = D-ribulose 5-phosphate. The protein operates within carbohydrate degradation; pentose phosphate pathway; D-ribose 5-phosphate from D-ribulose 5-phosphate (non-oxidative stage): step 1/1. Its function is as follows. Catalyzes the reversible conversion of ribose-5-phosphate to ribulose 5-phosphate. The polypeptide is Ribose-5-phosphate isomerase A (Methanococcus maripaludis (strain C7 / ATCC BAA-1331)).